Reading from the N-terminus, the 84-residue chain is U21-theraphotoxin-Cg1a 3 (84 aa).

The first 21 residues, 1–21, serve as a signal peptide directing secretion; sequence MKVSVLITLAVLGVMFLLTSA. Residues 22–47 constitute a propeptide that is removed on maturation; it reads EERGSDQMDSPAWLKSMERIFQSEER. 3 disulfides stabilise this stretch: C49–C63, C56–C68, and C62–C76. Residue V82 is modified to Valine amide.

This sequence belongs to the neurotoxin 10 (Hwtx-1) family. 05 (F4a) subfamily. Expressed by the venom gland.

The protein localises to the secreted. Functionally, probable ion channel inhibitor. The chain is U21-theraphotoxin-Cg1a 3 from Chilobrachys guangxiensis (Chinese earth tiger tarantula).